The chain runs to 183 residues: Large ribosomal subunit protein uL10 (183 aa).

It belongs to the universal ribosomal protein uL10 family. Part of the ribosomal stalk of the 50S ribosomal subunit. The N-terminus interacts with L11 and the large rRNA to form the base of the stalk. The C-terminus forms an elongated spine to which L12 dimers bind in a sequential fashion forming a multimeric L10(L12)X complex.

In terms of biological role, forms part of the ribosomal stalk, playing a central role in the interaction of the ribosome with GTP-bound translation factors. In Mesomycoplasma hyopneumoniae (strain 7448) (Mycoplasma hyopneumoniae), this protein is Large ribosomal subunit protein uL10.